Reading from the N-terminus, the 337-residue chain is Leucine-rich repeat-containing protein 39 (337 aa).

9 LRR repeats span residues 84-105 (QLQE…IGRF), 107-128 (HLIV…IGLL), 130-152 (RLQE…SNCT), 153-176 (SLEK…SKLL), 177-198 (KLTH…VLDM), 200-221 (ALEW…LDRM), 223-244 (SLHT…IKNM), 246-267 (NLGT…MEEM), and 269-290 (NLRF…PPSD).

In terms of assembly, interacts with MYH7 (via C-terminus). As to expression, expressed in heart and skeletal muscle.

The protein resides in the cytoplasm. The protein localises to the myofibril. It localises to the sarcomere. It is found in the m line. In terms of biological role, component of the sarcomeric M-band which plays a role in myocyte response to biomechanical stress. May regulate expression of other M-band proteins via an SRF-dependent pathway. Important for normal contractile function in heart. In Mus musculus (Mouse), this protein is Leucine-rich repeat-containing protein 39.